The following is a 246-amino-acid chain: Bis(5'-nucleosyl)-tetraphosphatase PrpE [asymmetrical] (246 aa).

This sequence belongs to the PrpE family. It depends on Ni(2+) as a cofactor.

It catalyses the reaction P(1),P(4)-bis(5'-guanosyl) tetraphosphate + H2O = GMP + GTP + 2 H(+). In terms of biological role, asymmetrically hydrolyzes Ap4p to yield AMP and ATP. The protein is Bis(5'-nucleosyl)-tetraphosphatase PrpE [asymmetrical] of Bacillus cereus (strain ZK / E33L).